We begin with the raw amino-acid sequence, 212 residues long: ER lumen protein-retaining receptor 1 (212 aa).

The Lumenal segment spans residues 1 to 4 (MNLF). A helical transmembrane segment spans residues 5-24 (RFLGDLSHLLAIILLLLKIW). The Cytoplasmic segment spans residues 25–32 (KSRSCAGI). The chain crosses the membrane as a helical span at residues 33–52 (SGKSQVLFAVVFTARYLDLF). An interaction with the K-D-E-L motif on target proteins region spans residues 47 to 48 (RY). Over 53 to 58 (TNYISL) the chain is Lumenal. Residues 59-79 (YNTCMKVVYIACSFTTVWMIY) traverse the membrane as a helical segment. The Cytoplasmic segment spans residues 80–92 (SKFKATYDGNHDT). Residues 93 to 110 (FRVEFLVVPTAVLAFLVN) form a helical membrane-spanning segment. Residues 111–116 (HDFTPL) lie on the Lumenal side of the membrane. A helical membrane pass occupies residues 117-135 (EILWTFSIYLESVAILPQL). The Cytoplasmic segment spans residues 136-149 (FMVSKTGEAETITS). The helical transmembrane segment at 150–168 (HYLFALGVYRTLYLFNWIW) threads the bilayer. The interaction with the K-D-E-L motif on target proteins stretch occupies residues 159 to 169 (RTLYLFNWIWR). Topologically, residues 169–178 (RYHFEGFFDL) are lumenal. A helical membrane pass occupies residues 179–199 (IAIVAGLVQTVLYCDFFYLYI). Residues 200–212 (TKVLKGKKLSLPA) are Cytoplasmic-facing. The interval 204–207 (KGKK) is important for recycling of cargo proteins with the sequence motif K-D-E-L from the Golgi to the endoplasmic reticulum. Ser-209 is modified (phosphoserine; by PKA).

This sequence belongs to the ERD2 family. Upon ligand binding the receptor oligomerizes and interacts with components of the transport machinery such as ARFGAP1 and ARF1. In terms of processing, phosphorylation by PKA at Ser-209 is required for endoplasmic reticulum retention function.

The protein localises to the golgi apparatus membrane. Its subcellular location is the cytoplasmic vesicle. It localises to the COPI-coated vesicle membrane. The protein resides in the endoplasmic reticulum membrane. It is found in the endoplasmic reticulum-Golgi intermediate compartment membrane. Functionally, receptor for the C-terminal sequence motif K-D-E-L that is present on endoplasmic reticulum resident proteins and that mediates their recycling from the Golgi back to the endoplasmic reticulum. The sequence is that of ER lumen protein-retaining receptor 1 (Kdelr1) from Rattus norvegicus (Rat).